The primary structure comprises 79 residues: Translational regulator CsrA (79 aa).

The protein belongs to the CsrA/RsmA family. In terms of assembly, homodimer; the beta-strands of each monomer intercalate to form a hydrophobic core, while the alpha-helices form wings that extend away from the core.

It localises to the cytoplasm. A translational regulator that binds mRNA to regulate translation initiation and/or mRNA stability. Usually binds in the 5'-UTR at or near the Shine-Dalgarno sequence preventing ribosome-binding, thus repressing translation. Its main target seems to be the major flagellin gene, while its function is anatagonized by FliW. This is Translational regulator CsrA from Maridesulfovibrio salexigens (strain ATCC 14822 / DSM 2638 / NCIMB 8403 / VKM B-1763) (Desulfovibrio salexigens).